A 667-amino-acid chain; its full sequence is DNA ligase (667 aa).

NAD(+) contacts are provided by residues 32–36 (DSEYD), 81–82 (SL), and Glu110. Lys112 (N6-AMP-lysine intermediate) is an active-site residue. Residues Arg133, Glu167, Lys283, and Lys307 each contribute to the NAD(+) site. Cys401, Cys404, Cys419, and Cys424 together coordinate Zn(2+). Residues 586-667 (EGHPDFKDKT…FVQKQNEIEG (82 aa)) form the BRCT domain.

The protein belongs to the NAD-dependent DNA ligase family. LigA subfamily. Mg(2+) serves as cofactor. Mn(2+) is required as a cofactor.

It carries out the reaction NAD(+) + (deoxyribonucleotide)n-3'-hydroxyl + 5'-phospho-(deoxyribonucleotide)m = (deoxyribonucleotide)n+m + AMP + beta-nicotinamide D-nucleotide.. Its function is as follows. DNA ligase that catalyzes the formation of phosphodiester linkages between 5'-phosphoryl and 3'-hydroxyl groups in double-stranded DNA using NAD as a coenzyme and as the energy source for the reaction. It is essential for DNA replication and repair of damaged DNA. This is DNA ligase from Staphylococcus saprophyticus subsp. saprophyticus (strain ATCC 15305 / DSM 20229 / NCIMB 8711 / NCTC 7292 / S-41).